Here is a 344-residue protein sequence, read N- to C-terminus: Heat-inducible transcription repressor HrcA (344 aa).

It belongs to the HrcA family.

In terms of biological role, negative regulator of class I heat shock genes (grpE-dnaK-dnaJ and groELS operons). Prevents heat-shock induction of these operons. In Streptococcus pneumoniae (strain ATCC 700669 / Spain 23F-1), this protein is Heat-inducible transcription repressor HrcA.